We begin with the raw amino-acid sequence, 171 residues long: Lipoprotein signal peptidase (171 aa).

Transmembrane regions (helical) follow at residues 15 to 35, 47 to 67, 72 to 92, and 107 to 127; these read WLWL…IVMD, VLPF…SFLS, WQRW…AYWM, and ALII…GFVV. Residues aspartate 128 and aspartate 146 contribute to the active site. A helical membrane pass occupies residues 141–161; sequence AFNLADSTICIGAAMIILDGF.

It belongs to the peptidase A8 family.

It localises to the cell inner membrane. The enzyme catalyses Release of signal peptides from bacterial membrane prolipoproteins. Hydrolyzes -Xaa-Yaa-Zaa-|-(S,diacylglyceryl)Cys-, in which Xaa is hydrophobic (preferably Leu), and Yaa (Ala or Ser) and Zaa (Gly or Ala) have small, neutral side chains.. It functions in the pathway protein modification; lipoprotein biosynthesis (signal peptide cleavage). Its function is as follows. This protein specifically catalyzes the removal of signal peptides from prolipoproteins. The chain is Lipoprotein signal peptidase from Vibrio cholerae serotype O1 (strain ATCC 39315 / El Tor Inaba N16961).